Reading from the N-terminus, the 918-residue chain is MESSNHLPNKDSDTVSVTPVEFSNYQCEINPGFNDFLKKSGFEDFGFKFNVVTILGSQSSGKSHLLNSLFNASFQTMDASKGHSQTTKGIWGSLVLSKDTSMNATVVFDSEGTDSRERGEGRLTFEHRSSLFCLALSDVVIVNIWYNSMGNLTGSNYGLLKTVVEANLELVDTNNEENYKTVLFFCVRDWSPSLSPLNVVKDYVLNNYMSSIWNEISKPARFENLGVESLFEIRVFGLSNAVTQSESFEMDVKEVKKTWNSLKPREYSRRVPSDGFFVYSKNVWKTIIEQNHLDIPTQKEMLSSYRCSEIKTMILESLTNALPELKEKDFSEYLMGLLKKVENQYFSQASRYDPVVSKKVGKELLEQVCRKFQPFFESALGDYVKKLAVESSSLLDKEFSVNSSGKELKVSNARPYTVWPNFSKKCEELQKKQTEKLSHHLSSFKVTFKSTVSFEFEFEYQPLKDHLNLLVSSEFEVLRSRHLELLKQQLDSMCNSCFALVKNNMMDRSLNEDQFWDYFDELFDETHKNCVDQLTTSYVGLVKGATRTEFEQLSLVLLLKATQSNFEELQNNLEQLLLERFDKFFNYQEFKGELIPTEWHKQSAQELNNRYKESKEDALTLLQVLKTTKTKKLPSFDANYVKKNQYFYSTLEGPVSDKYSSPLTEQFTIELTNSCSKKFMEMYKNAQVVQNAGTSVSSWRNIPPVFWLVLLVLGWNELRAAFRVLLKFYILIPLLIVSYFTFSYSANKLLGPKANEYVKPVRDKALSLLTALFAWFVRTLHMIASKSSSFKQQTKNLKMAKKGNKNRDSDDEYVGKTVTKSSHSIYKHREPMDINLIVDHDEVEAEKNNLPCWRAAYASGPARPQRHLCVICGFFANYKCRNCATRRIEAINSYYCSLRCLEVHNETNCGKAVHLAQW.

Topologically, residues 1–701 are cytoplasmic; that stretch reads MESSNHLPNK…AGTSVSSWRN (701 aa). The GB1/RHD3-type G domain maps to 46–280; that stretch reads GFKFNVVTIL…VPSDGFFVYS (235 aa). 56 to 63 is a GTP binding site; that stretch reads GSQSSGKS. The stretch at 554–626 forms a coiled coil; the sequence is SLVLLLKATQ…DALTLLQVLK (73 aa). A helical transmembrane segment spans residues 702–722; it reads IPPVFWLVLLVLGWNELRAAF. Over 723–725 the chain is Lumenal; the sequence is RVL. A helical transmembrane segment spans residues 726-746; the sequence is LKFYILIPLLIVSYFTFSYSA. Topologically, residues 747–918 are cytoplasmic; that stretch reads NKLLGPKANE…CGKAVHLAQW (172 aa).

Belongs to the TRAFAC class dynamin-like GTPase superfamily. GB1/RHD3 GTPase family. RHD3 subfamily.

It is found in the endoplasmic reticulum membrane. Probable GTP-binding protein that may be involved in cell development. The chain is Protein SEY1 homolog from Theileria annulata.